A 262-amino-acid chain; its full sequence is Ubiquinone biosynthesis protein COQ4, mitochondrial (262 aa).

H154, D155, H158, and E170 together coordinate Zn(2+). The segment at 243-262 is disordered; the sequence is LGIEQPPDLRQMKKDMAKKK. Over residues 252–262 the composition is skewed to basic and acidic residues; the sequence is RQMKKDMAKKK.

It belongs to the COQ4 family. In terms of assembly, component of a multi-subunit COQ enzyme complex, composed of at least COQ3, COQ4, COQ5, COQ6, COQ7 and COQ9. It depends on Zn(2+) as a cofactor.

Its subcellular location is the mitochondrion inner membrane. It carries out the reaction a 4-hydroxy-3-methoxy-5-(all-trans-polyprenyl)benzoate + H(+) = a 2-methoxy-6-(all-trans-polyprenyl)phenol + CO2. Its pathway is cofactor biosynthesis; ubiquinone biosynthesis. Its function is as follows. Lyase that catalyzes the C1-decarboxylation of 4-hydroxy-3-methoxy-5-(all-trans-polyprenyl)benzoic acid into 2-methoxy-6-(all-trans-polyprenyl)phenol during ubiquinone biosynthesis. In Yarrowia lipolytica (strain CLIB 122 / E 150) (Yeast), this protein is Ubiquinone biosynthesis protein COQ4, mitochondrial.